Reading from the N-terminus, the 363-residue chain is Elongation factor Tu, chloroplastic (363 aa).

Residues threonine 1 to glutamate 189 form the tr-type G domain. GTP contacts are provided by residues aspartate 55–histidine 59 and asparagine 110–aspartate 113.

Belongs to the TRAFAC class translation factor GTPase superfamily. Classic translation factor GTPase family. EF-Tu/EF-1A subfamily.

It is found in the plastid. Its subcellular location is the chloroplast. The enzyme catalyses GTP + H2O = GDP + phosphate + H(+). GTP hydrolase that promotes the GTP-dependent binding of aminoacyl-tRNA to the A-site of ribosomes during protein biosynthesis. This chain is Elongation factor Tu, chloroplastic (tufA), found in Gymnochlora stellata.